The chain runs to 362 residues: Molybdenum import ATP-binding protein ModC (362 aa).

Residues 4–238 (AGEAAIRARF…LDLPIRLGED (235 aa)) enclose the ABC transporter domain. ATP is bound at residue 38–45 (GHSGSGKT). The 66-residue stretch at 297-362 (GTSILNTLPA…AQIKAVALVG (66 aa)) folds into the Mop domain.

The protein belongs to the ABC transporter superfamily. Molybdate importer (TC 3.A.1.8) family. As to quaternary structure, the complex is composed of two ATP-binding proteins (ModC), two transmembrane proteins (ModB) and a solute-binding protein (ModA).

Its subcellular location is the cell inner membrane. It catalyses the reaction molybdate(out) + ATP + H2O = molybdate(in) + ADP + phosphate + H(+). Its function is as follows. Part of the ABC transporter complex ModABC involved in molybdenum import. Responsible for energy coupling to the transport system. The sequence is that of Molybdenum import ATP-binding protein ModC from Thiobacillus denitrificans (strain ATCC 25259 / T1).